The chain runs to 342 residues: Lumican (342 aa).

The first 18 residues, 1 to 18 (MNLGVFPLLLALIGGASS), serve as a signal peptide directing secretion. A sulfotyrosine mark is found at Y20, Y23, and Y34. One can recognise an LRRNT domain in the interval 32-70 (ALYGRSSPNCAPECNCPESYPSAMYCDELKLKSVPMVPP). LRR repeat units lie at residues 71–92 (GIKYLYLRNNQIDHIDDKAFEN), 95–118 (DLQWLILDHNLLENSKIKGKVFSK), 121–141 (QLKKLHINYNNLTESVGPLPK), 142–163 (SLVDLQLTNNKISKLGSFDGLV), 164–185 (NLTFIHLQHNQLKEDAVSAALK), 189–209 (SLEYLDLSFNQMTKLPSGLPV), 210–231 (SLLTLYLDNNKISNIPDEYFKR), and 234–254 (ALQYLRLSHNELADSGVPGNS). N92 carries an N-linked (GlcNAc...) (keratan sulfate) asparagine glycan. N131 carries an N-linked (GlcNAc...) (keratan sulfate) asparagine glycan. An N-linked (GlcNAc...) (keratan sulfate) asparagine glycan is attached at N164. N-linked (GlcNAc...) (keratan sulfate) asparagine glycosylation is present at N256. LRR repeat units lie at residues 259–280 (SLLELDLSYNKLKSIPTVNENL) and 281–300 (ENYYLEVNELEKFDVKSFCK). The cysteines at positions 299 and 332 are disulfide-linked. S308 carries the post-translational modification Phosphoserine. An LRR 11 repeat occupies 309–330 (KIKHLRLDGNHITQTSLPPDMY).

Belongs to the small leucine-rich proteoglycan (SLRP) family. SLRP class II subfamily. In terms of assembly, binds to laminin. Sulfated on tyrosine residue(s). Post-translationally, contains keratan sulfate. As to expression, cornea and other tissues.

The protein localises to the secreted. Its subcellular location is the extracellular space. The protein resides in the extracellular matrix. The sequence is that of Lumican (LUM) from Bos taurus (Bovine).